The primary structure comprises 461 residues: Fumarate hydratase class II (461 aa).

Residues 97–99 (SGT), 127–130 (HPND), 137–139 (SSN), and T185 each bind substrate. H186 acts as the Proton donor/acceptor in catalysis. S316 is a catalytic residue. Substrate is bound by residues S317 and 322–324 (KVN).

The protein belongs to the class-II fumarase/aspartase family. Fumarase subfamily. In terms of assembly, homotetramer.

Its subcellular location is the cytoplasm. It catalyses the reaction (S)-malate = fumarate + H2O. It functions in the pathway carbohydrate metabolism; tricarboxylic acid cycle; (S)-malate from fumarate: step 1/1. Involved in the TCA cycle. Catalyzes the stereospecific interconversion of fumarate to L-malate. This chain is Fumarate hydratase class II, found in Staphylococcus aureus (strain COL).